The primary structure comprises 287 residues: S-methyl-5'-thioadenosine phosphorylase (287 aa).

Residues T13 and 55–56 contribute to the phosphate site; that span reads RH. M186 is a substrate binding site. Residue T187 participates in phosphate binding. 210 to 212 contacts substrate; it reads DYD.

Belongs to the PNP/MTAP phosphorylase family. MTAP subfamily. Homohexamer. Dimer of a homotrimer.

It catalyses the reaction S-methyl-5'-thioadenosine + phosphate = 5-(methylsulfanyl)-alpha-D-ribose 1-phosphate + adenine. The protein operates within amino-acid biosynthesis; L-methionine biosynthesis via salvage pathway; S-methyl-5-thio-alpha-D-ribose 1-phosphate from S-methyl-5'-thioadenosine (phosphorylase route): step 1/1. Its function is as follows. Catalyzes the reversible phosphorylation of S-methyl-5'-thioadenosine (MTA) to adenine and 5-methylthioribose-1-phosphate. Involved in the breakdown of MTA, a major by-product of polyamine biosynthesis. Responsible for the first step in the methionine salvage pathway after MTA has been generated from S-adenosylmethionine. Has broad substrate specificity with 6-aminopurine nucleosides as preferred substrates. This Leptospira interrogans serogroup Icterohaemorrhagiae serovar copenhageni (strain Fiocruz L1-130) protein is S-methyl-5'-thioadenosine phosphorylase.